The chain runs to 185 residues: Probable chorismate pyruvate-lyase (185 aa).

The substrate site is built by arginine 84, leucine 122, and glutamate 178.

The protein belongs to the UbiC family.

It is found in the cytoplasm. The catalysed reaction is chorismate = 4-hydroxybenzoate + pyruvate. It functions in the pathway cofactor biosynthesis; ubiquinone biosynthesis. Functionally, removes the pyruvyl group from chorismate, with concomitant aromatization of the ring, to provide 4-hydroxybenzoate (4HB) for the ubiquinone pathway. The protein is Probable chorismate pyruvate-lyase of Hydrogenovibrio crunogenus (strain DSM 25203 / XCL-2) (Thiomicrospira crunogena).